Consider the following 235-residue polypeptide: Small ribosomal subunit protein eS6 (235 aa).

A phosphoserine mark is found at S229 and S230.

The protein belongs to the eukaryotic ribosomal protein eS6 family. In terms of processing, phosphorylated.

The polypeptide is Small ribosomal subunit protein eS6 (RPS6) (Kluyveromyces marxianus (Yeast)).